The following is a 407-amino-acid chain: uncharacterized protein (407 aa).

A Glycyl lysine isopeptide (Lys-Gly) (interchain with G-Cter in ubiquitin) cross-link involves residue Lys22.

It belongs to the SVF1 family.

It is found in the cytoplasm. This is an uncharacterized protein from Saccharomyces cerevisiae (strain ATCC 204508 / S288c) (Baker's yeast).